We begin with the raw amino-acid sequence, 2871 residues long: Fibrillin-1 (2871 aa).

The signal sequence occupies residues 1 to 24 (MRRGRLLEIALGFTVLLASYTSHG). Residues 25–44 (ADANLEAGNVKETRASRAKR) constitute a propeptide that is removed on maturation. Residues 45-81 (RGGGGHDALKGPNVCGSRYNAYCCPGWKTLPGGNQCI) are fibrillin unique N-terminal (FUN) domain. Residues 45 to 450 (RGGGGHDALK…PPRVLPVNVT (406 aa)) form an N-terminal domain region. Intrachain disulfides connect Cys-59/Cys-68, Cys-67/Cys-80, Cys-85/Cys-94, Cys-89/Cys-100, Cys-102/Cys-111, Cys-119/Cys-129, Cys-123/Cys-134, Cys-136/Cys-145, Cys-150/Cys-160, Cys-154/Cys-166, and Cys-168/Cys-177. EGF-like domains are found at residues 81-112 (IVPI…PSCG), 115-146 (SIQH…THCG), and 147-178 (QPVC…PQCE). The segment at 119 to 329 (CNIRCMNGGS…YTSPDGTRCI (211 aa)) is interaction with MFAP4. Residues 184 to 236 (GPCFTVISNQMCQGQLSGIVCTKTLCCATVGRAWGHPCEMCPAQPHPCRRGFI) enclose the TB 1 domain. The segment at 195–221 (CQGQLSGIVCTKTLCCATVGRAWGHPC) is hybrid domain 1. The region spanning 246-287 (DVDECQAIPGLCQGGNCINTVGSFECKCPAGHKLNEVSQKCE) is the EGF-like 4; calcium-binding domain. 6 cysteine pairs are disulfide-bonded: Cys-250–Cys-262, Cys-257–Cys-271, Cys-273–Cys-286, Cys-292–Cys-304, Cys-299–Cys-313, and Cys-315–Cys-328. A glycan (O-linked (Glc) serine) is linked at Ser-268. One can recognise an EGF-like 5; calcium-binding domain in the interval 288 to 329 (DIDECSTIPGICEGGECTNTVSSYFCKCPPGFYTSPDGTRCI). Residues 334–389 (GYCYTALTNGRCSNQLPQSITKMQCCCDAGRCWSPGVTVAPEMCPIRATEDFNKLC) form the TB 2 domain. An N-linked (GlcNAc...) asparagine glycan is attached at Asn-448. The EGF-like 6 domain maps to 449-489 (VTDYCQLVRYLCQNGRCIPTPGSYRCECNKGFQLDLRGECI). 15 disulfide bridges follow: Cys-453/Cys-465, Cys-460/Cys-474, Cys-476/Cys-488, Cys-494/Cys-504, Cys-499/Cys-513, Cys-515/Cys-528, Cys-534/Cys-546, Cys-541/Cys-555, Cys-557/Cys-570, Cys-576/Cys-587, Cys-582/Cys-596, Cys-598/Cys-611, Cys-617/Cys-628, Cys-623/Cys-637, and Cys-639/Cys-652. Ser-471 carries an O-linked (Glc) serine glycan. Residues 490-529 (DVDECEKNPCAGGECINNQGSYTCQCRAGYQSTLTRTECR) form the EGF-like 7; calcium-binding domain. O-linked (Glc) serine glycosylation is present at Ser-510. The EGF-like 8; calcium-binding domain maps to 530–571 (DIDECLQNGRICNNGRCINTDGSFHCVCNAGFHVTRDGKNCE). A glycan (O-linked (Glc) serine) is linked at Ser-552. Positions 572–612 (DMDECSIRNMCLNGMCINEDGSFKCICKPGFQLASDGRYCK) constitute an EGF-like 9; calcium-binding domain. A glycan (O-linked (Glc) serine) is linked at Ser-593. An EGF-like 10; calcium-binding domain is found at 613-653 (DINECETPGICMNGRCVNTDGSYRCECFPGLAVGLDGRVCV). A glycan (O-linked (Glc) serine) is linked at Ser-634. Residues 659–711 (STCYGGYKRGQCIKPLFGAVTKSECCCASTEYAFGEPCQPCPAQNSAEYQALC) enclose the TB 3 domain. The EGF-like 11; calcium-binding domain occupies 723 to 764 (DINECALDPDICPNGICENLRGTYKCICNSGYEVDSTGKNCV). Intrachain disulfides connect Cys-727-Cys-739, Cys-734-Cys-748, Cys-750-Cys-763, Cys-769-Cys-781, Cys-776-Cys-790, Cys-792-Cys-805, Cys-811-Cys-821, Cys-816-Cys-830, Cys-832-Cys-845, Cys-853-Cys-875, Cys-862-Cys-887, Cys-876-Cys-890, Cys-896-Cys-908, Cys-914-Cys-926, Cys-921-Cys-935, and Cys-937-Cys-950. In terms of domain architecture, EGF-like 12; calcium-binding spans 765–806 (DINECVLNSLLCDNGQCRNTPGSFVCTCPKGFIYKPDLKTCE). Ser-787 carries an O-linked (Glc) serine glycan. The EGF-like 13; calcium-binding domain occupies 807 to 846 (DIDECESSPCINGVCKNSPGSFICECSSESTLDPTKTICI). Residue Ser-827 is glycosylated (O-linked (Glc) serine). A TB 4 domain is found at 851–902 (GTCWQTVIDGRCEININGATLKSQCCSSLGAAWGSPCTLCQVDPICGKGYSR). Positions 862 to 887 (CEININGATLKSQCCSSLGAAWGSPC) are hybrid domain 2. The EGF-like 14; calcium-binding domain maps to 910–951 (DIDECEVFPGVCKNGLCVNTRGSFKCQCPSGMTLDATGRICL). The region spanning 956–1008 (ETCFLRYEDEECTLPIAGRHRMDACCCSVGAAWGTEECEECPMRNTPEYEELC) is the TB 5 domain. The EGF-like 15; calcium-binding domain occupies 1028-1069 (DINECKMIPSLCTHGKCRNTIGSFKCRCDSGFALDSEERNCT). Intrachain disulfides connect Cys-1032/Cys-1044, Cys-1039/Cys-1053, Cys-1055/Cys-1068, Cys-1074/Cys-1086, Cys-1081/Cys-1095, Cys-1097/Cys-1111, Cys-1117/Cys-1129, Cys-1124/Cys-1138, Cys-1140/Cys-1153, Cys-1159/Cys-1171, Cys-1166/Cys-1180, Cys-1182/Cys-1195, Cys-1201/Cys-1212, Cys-1208/Cys-1221, Cys-1223/Cys-1236, Cys-1242/Cys-1254, Cys-1249/Cys-1263, Cys-1265/Cys-1278, Cys-1284/Cys-1296, Cys-1291/Cys-1305, Cys-1307/Cys-1320, Cys-1326/Cys-1339, Cys-1333/Cys-1348, Cys-1350/Cys-1361, Cys-1367/Cys-1380, Cys-1374/Cys-1389, Cys-1391/Cys-1402, Cys-1408/Cys-1420, Cys-1415/Cys-1429, Cys-1431/Cys-1444, Cys-1450/Cys-1461, Cys-1456/Cys-1470, Cys-1472/Cys-1485, Cys-1491/Cys-1502, Cys-1497/Cys-1511, Cys-1513/Cys-1526, Cys-1534/Cys-1562, Cys-1549/Cys-1574, Cys-1563/Cys-1577, Cys-1564/Cys-1589, Cys-1610/Cys-1622, Cys-1617/Cys-1631, Cys-1633/Cys-1646, Cys-1652/Cys-1663, Cys-1658/Cys-1672, and Cys-1674/Cys-1687. O-linked (Glc) serine glycosylation is present at Ser-1050. N-linked (GlcNAc...) asparagine glycosylation occurs at Asn-1067. Residues 1070 to 1112 (DIDECRISPDLCGRGQCVNTPGDFECKCDEGYESGFMMMKNCM) form the EGF-like 16; calcium-binding domain. Residues 1113–1154 (DIDECQRDPLLCRGGVCHNTEGSYRCECPPGHQLSPNISACI) enclose the EGF-like 17; calcium-binding domain. Ser-1135 is a glycosylation site (O-linked (Glc) serine). Asn-1149 is a glycosylation site (N-linked (GlcNAc...) asparagine). Residues 1155–1196 (DINECELSAHLCPNGRCVNLIGKYQCACNPGYHSTPDRLFCV) enclose the EGF-like 18; calcium-binding domain. The EGF-like 19; calcium-binding domain occupies 1197–1237 (DIDECSIMNGGCETFCTNSEGSYECSCQPGFALMPDQRSCT). O-linked (Glc) serine glycosylation is present at Ser-1218. One can recognise an EGF-like 20; calcium-binding domain in the interval 1238-1279 (DIDECEDNPNICDGGQCTNIPGEYRCLCYDGFMASEDMKTCV). An EGF-like 21; calcium-binding domain is found at 1280-1321 (DVNECDLNPNICLSGTCENTKGSFICHCDMGYSGKKGKTGCT). Ser-1302 is a glycosylation site (O-linked (Glc) serine). The region spanning 1322–1362 (DINECEIGAHNCGKHAVCTNTAGSFKCSCSPGWIGDGIKCT) is the EGF-like 22; calcium-binding domain. Residue Ser-1345 is glycosylated (O-linked (Glc) serine). Positions 1363-1403 (DLDECSNGTHMCSQHADCKNTMGSYRCLCKEGYTGDGFTCT) constitute an EGF-like 23; calcium-binding domain. N-linked (GlcNAc...) asparagine glycosylation occurs at Asn-1369. O-linked (Glc) serine glycosylation is present at Ser-1386. An EGF-like 24; calcium-binding domain is found at 1404–1445 (DLDECSENLNLCGNGQCLNAPGGYRCECDMGFVPSADGKACE). The EGF-like 25; calcium-binding domain occupies 1446–1486 (DIDECSLPNICVFGTCHNLPGLFRCECEIGYELDRSGGNCT). Residue Asn-1484 is glycosylated (N-linked (GlcNAc...) asparagine). The 41-residue stretch at 1487-1527 (DVNECLDPTTCISGNCVNTPGSYICDCPPDFELNPTRVGCV) folds into the EGF-like 26; calcium-binding domain. Residue Ser-1508 is glycosylated (O-linked (Glc) serine). Residues 1528–2731 (DTRSGNCYLD…GYPKRGRKRR (1204 aa)) are C-terminal domain. Residues 1532 to 1589 (GNCYLDIRPRGDNGDTACSNEIGVGVSKASCCCSLGKAWGTPCEMCPAVNTSEYKILC) form the TB 6 domain. The Cell attachment site motif lies at 1541-1543 (RGD). Asn-1581 is a glycosylation site (N-linked (GlcNAc...) asparagine). An EGF-like 27; calcium-binding domain is found at 1606 to 1647 (DIDECQELPGLCQGGKCINTFGSFQCRCPTGYYLNEDTRVCD). Ser-1628 is a glycosylation site (O-linked (Glc) serine). The EGF-like 28; calcium-binding domain maps to 1648–1688 (DVNECETPGICGPGTCYNTVGNYTCICPPDYMQVNGGNNCM). N-linked (GlcNAc...) asparagine glycosylation occurs at Asn-1669. Residues 1693–1748 (SLCYRNYYADNQTCDGELLFNMTKKMCCCSYNIGRAWNKPCEQCPIPSTDEFATLC) enclose the TB 7 domain. Asn-1703 and Asn-1713 each carry an N-linked (GlcNAc...) asparagine glycan. Residues 1766–1807 (DIDECREIPGVCENGVCINMVGSFRCECPVGFFYNDKLLVCE) form the EGF-like 29; calcium-binding domain. 40 cysteine pairs are disulfide-bonded: Cys-1770–Cys-1782, Cys-1777–Cys-1791, Cys-1793–Cys-1806, Cys-1812–Cys-1824, Cys-1818–Cys-1833, Cys-1835–Cys-1847, Cys-1853–Cys-1865, Cys-1860–Cys-1874, Cys-1876–Cys-1889, Cys-1895–Cys-1905, Cys-1900–Cys-1914, Cys-1916–Cys-1928, Cys-1934–Cys-1947, Cys-1942–Cys-1956, Cys-1958–Cys-1971, Cys-1977–Cys-1989, Cys-1984–Cys-1998, Cys-2000–Cys-2011, Cys-2017–Cys-2029, Cys-2024–Cys-2038, Cys-2040–Cys-2053, Cys-2061–Cys-2083, Cys-2070–Cys-2096, Cys-2084–Cys-2099, Cys-2085–Cys-2111, Cys-2131–Cys-2142, Cys-2137–Cys-2151, Cys-2153–Cys-2164, Cys-2170–Cys-2181, Cys-2176–Cys-2190, Cys-2192–Cys-2204, Cys-2210–Cys-2221, Cys-2217–Cys-2230, Cys-2232–Cys-2245, Cys-2251–Cys-2265, Cys-2258–Cys-2274, Cys-2276–Cys-2289, Cys-2295–Cys-2307, Cys-2302–Cys-2316, and Cys-2318–Cys-2331. In terms of domain architecture, EGF-like 30; calcium-binding spans 1808–1848 (DIDECQNGPVCQRNAECINTAGSYRCDCKPGYRFTSTGQCN). O-linked (Glc) serine glycosylation occurs at Ser-1830. Positions 1849 to 1890 (DRNECQEIPNICSHGQCIDTVGSFYCLCHTGFKTNDDQTMCL) constitute an EGF-like 31; calcium-binding domain. Residue Ser-1871 is glycosylated (O-linked (Glc) serine). The EGF-like 32; calcium-binding domain occupies 1891–1929 (DINECERDACGNGTCRNTIGSFNCRCNHGFILSHNNDCI). Asn-1902 carries an N-linked (GlcNAc...) asparagine glycan. O-linked (Glc) serine glycosylation is present at Ser-1911. The region spanning 1930-1972 (DVDECASGNGNLCRNGQCINTVGSFQCQCNEGYEVAPDGRTCV) is the EGF-like 33; calcium-binding domain. Ser-1953 carries O-linked (Glc) serine glycosylation. Positions 1973–2012 (DINECLLEPRKCAPGTCQNLDGSYRCICPPGYSLQNEKCE) constitute an EGF-like 34; calcium-binding domain. Residues 2013-2054 (DIDECVEEPEICALGTCSNTEGSFKCLCPEGFSLSSSGRRCQ) form the EGF-like 35; calcium-binding domain. Ser-2035 carries an O-linked (Glc) serine glycan. Residues 2059-2111 (SYCYAKFEGGKCSSPKSRNHSKQECCCALKGEGWGDPCELCPTEPDEAFRQIC) form the TB 8 domain. A glycan (N-linked (GlcNAc...) asparagine) is linked at Asn-2077. Residues 2127–2165 (DMDECKEPDVCKHGQCINTDGSYRCECPFGYILAGNECV) enclose the EGF-like 36; calcium-binding domain. The O-linked (Glc) serine glycan is linked to Ser-2148. One can recognise an EGF-like 37; calcium-binding domain in the interval 2166–2205 (DTDECSVGNPCGNGTCKNVIGGFECTCEEGFEPGPMMTCE). The N-linked (GlcNAc...) asparagine glycan is linked to Asn-2178. One can recognise an EGF-like 38; calcium-binding domain in the interval 2206–2246 (DINECAQNPLLCAFRCVNTYGSYECKCPVGYVLREDRRMCK). The O-linked (Glc) serine glycan is linked to Ser-2227. An EGF-like 39; calcium-binding domain is found at 2247-2290 (DEDECEEGKHDCTEKQMECKNLIGTYMCICGPGYQRRPDGEGCV). The EGF-like 40; calcium-binding domain occupies 2291-2332 (DENECQTKPGICENGRCLNTRGSYTCECNDGFTASPNQDECL). Ser-2313 carries O-linked (Glc) serine glycosylation. Residues 2337–2390 (GYCFTEVLQNMCQIGSSNRNPVTKSECCCDGGRGWGPHCEICPFQGTVAFKKLC) enclose the TB 9 domain. The 42-residue stretch at 2402–2443 (DIDECKVIHDVCRNGECVNDRGSYHCICKTGYTPDITGTSCV) folds into the EGF-like 41; calcium-binding domain. 21 disulfides stabilise this stretch: Cys-2406/Cys-2418, Cys-2413/Cys-2427, Cys-2429/Cys-2442, Cys-2448/Cys-2459, Cys-2455/Cys-2468, Cys-2470/Cys-2483, Cys-2489/Cys-2500, Cys-2496/Cys-2509, Cys-2511/Cys-2522, Cys-2528/Cys-2541, Cys-2535/Cys-2550, Cys-2552/Cys-2565, Cys-2571/Cys-2581, Cys-2577/Cys-2590, Cys-2592/Cys-2605, Cys-2611/Cys-2622, Cys-2617/Cys-2631, Cys-2633/Cys-2646, Cys-2652/Cys-2663, Cys-2659/Cys-2672, and Cys-2674/Cys-2686. The EGF-like 42; calcium-binding domain maps to 2444 to 2484 (DLNECNQAPKPCNFICKNTEGSYQCSCPKGYILQEDGRSCK). Ser-2465 carries an O-linked (Glc) serine glycan. Residues 2485–2523 (DLDECATKQHNCQFLCVNTIGGFTCKCPPGFTQHHTSCI) form the EGF-like 43; calcium-binding domain. The EGF-like 44; calcium-binding domain maps to 2524-2566 (DNNECTSDINLCGSKGICQNTPGSFTCECQRGFSLDQTGSSCE). O-linked (Glc) serine glycosylation is present at Ser-2547. The region spanning 2567-2606 (DVDECEGNHRCQHGCQNIIGGYRCSCPQGYLQHYQWNQCV) is the EGF-like 45; calcium-binding domain. The EGF-like 46; calcium-binding domain occupies 2607 to 2647 (DENECLSAHICGGASCHNTLGSYKCMCPAGFQYEQFSGGCQ). The O-linked (Glc) serine glycan is linked to Ser-2628. The 40-residue stretch at 2648-2687 (DINECGSAQAPCSYGCSNTEGGYLCGCPPGYFRIGQGHCV) folds into the EGF-like 47; calcium-binding domain. Ser-2702 is subject to Phosphoserine; by FAM20C. Position 2709 is a phosphoserine (Ser-2709). The disordered stretch occupies residues 2726-2746 (RGRKRRSTNETDASNIEDQSE). Asn-2734 carries an N-linked (GlcNAc...) asparagine glycan. A compositionally biased stretch (polar residues) spans 2735 to 2746 (ETDASNIEDQSE). Residues Asn-2750 and Asn-2767 are each glycosylated (N-linked (GlcNAc...) asparagine).

It belongs to the fibrillin family. Interacts with COL16A1. Interacts with integrin alpha-V/beta-3. Interacts with ADAMTS10; this interaction promotes microfibril assembly. Interacts with THSD4; this interaction promotes fibril formation. Interacts (via N-terminal domain) with FBLN2 and FBLN5. Interacts with ELN. Forms a ternary complex with ELN and FBLN2 or FBLN5 and a significant interaction with ELN seen only in the presence of FBLN2 or FBLN5. Interacts (via N-terminal domain) with LTBP2 (via C-terminal domain) in a Ca(+2)-dependent manner. Interacts (via N-terminal domain) with LTBP1 (via C-terminal domain). Interacts with integrins ITGA5:ITGB1, ITGAV:ITGB3 and ITGAV:ITGB6. Interacts (via N-terminal domain) with BMP2, BMP4, BMP7, BMP10 and GDF5. Interacts (via N-terminal domain) with MFAP2 and MFAP5. Interacts with ADAMTSL5. Interacts with MFAP4. Interacts (via N-terminal domain) with TNFSF11 in a Ca(+2)-dependent manner. Interacts (via N-terminal domain) with EFEMP2; this interaction inhibits EFEMP2 binding to LOX and ELN. Post-translationally, cleavage of N- and C-terminus by furin is required for incorporation into the extracellular matrix and assembly into microfibrils. The C-terminus, which corresponds to the Asprosin chain, was initially thought to constitute a propeptide. Fibrillin-1 and Asprosin chains are still linked together during the secretion from cells, but are subsequently separated by furin, an essential step for incorporation of Fibrillin-1 into the nascent microfibrils. Forms intermolecular disulfide bonds either with other fibrillin-1 molecules or with other components of the microfibrils. In terms of processing, O-glycosylated on serine residues by POGLUT2 and POGLUT3 which is necessary for efficient protein secretion.

It is found in the secreted. It localises to the extracellular space. The protein localises to the extracellular matrix. Structural component of the 10-12 nm diameter microfibrils of the extracellular matrix, which conveys both structural and regulatory properties to load-bearing connective tissues. Fibrillin-1-containing microfibrils provide long-term force bearing structural support. In tissues such as the lung, blood vessels and skin, microfibrils form the periphery of the elastic fiber, acting as a scaffold for the deposition of elastin. In addition, microfibrils can occur as elastin-independent networks in tissues such as the ciliary zonule, tendon, cornea and glomerulus where they provide tensile strength and have anchoring roles. Fibrillin-1 also plays a key role in tissue homeostasis through specific interactions with growth factors, such as the bone morphogenetic proteins (BMPs), growth and differentiation factors (GDFs) and latent transforming growth factor-beta-binding proteins (LTBPs), cell-surface integrins and other extracellular matrix protein and proteoglycan components. Regulates osteoblast maturation by controlling TGF-beta bioavailability and calibrating TGF-beta and BMP levels, respectively. Negatively regulates osteoclastogenesis by binding and sequestering an osteoclast differentiation and activation factor TNFSF11. This leads to disruption of TNFSF11-induced Ca(2+) signaling and impairment of TNFSF11-mediated nuclear translocation and activation of transcription factor NFATC1 which regulates genes important for osteoclast differentiation and function. Mediates cell adhesion via its binding to cell surface receptors integrins ITGAV:ITGB3 and ITGA5:ITGB1. Binds heparin and this interaction has an important role in the assembly of microfibrils. Its function is as follows. Adipokine secreted by white adipose tissue that plays an important regulatory role in the glucose metabolism of liver, muscle and pancreas. Hormone that targets the liver in response to fasting to increase plasma glucose levels. Binds the olfactory receptor OR4M1 at the surface of hepatocytes and promotes hepatocyte glucose release by activating the protein kinase A activity in the liver, resulting in rapid glucose release into the circulation. May act as a regulator of adaptive thermogenesis by inhibiting browning and energy consumption, while increasing lipid deposition in white adipose tissue. Also acts as an orexigenic hormone that increases appetite: crosses the blood brain barrier and exerts effects on the hypothalamus. In the arcuate nucleus of the hypothalamus, asprosin directly activates orexigenic AgRP neurons and indirectly inhibits anorexigenic POMC neurons, resulting in appetite stimulation. Activates orexigenic AgRP neurons via binding to the olfactory receptor OR4M1. May also play a role in sperm motility in testis via interaction with OR4M1 receptor. This Homo sapiens (Human) protein is Fibrillin-1.